A 371-amino-acid chain; its full sequence is Cytochrome b (371 aa).

The next 4 helical transmembrane spans lie at 25 to 45 (FGSM…FLAI), 69 to 90 (WMMQ…YIHI), 105 to 125 (WMSG…GYVL), and 170 to 190 (FFAL…LHII). Heme b contacts are provided by His-75 and His-89. Residues His-174 and His-188 each coordinate heme b. His-193 serves as a coordination point for a ubiquinone. 4 helical membrane-spanning segments follow: residues 218 to 238 (HKDL…VSFL), 280 to 300 (LGGA…PFTH), 312 to 332 (LSQL…WAAT), and 339 to 358 (FIII…LSTP).

It belongs to the cytochrome b family. The cytochrome bc1 complex contains 3 respiratory subunits (MT-CYB, CYC1 and UQCRFS1), 2 core proteins (UQCRC1 and UQCRC2) and probably 6 low-molecular weight proteins. The cofactor is heme b.

The protein localises to the mitochondrion inner membrane. Component of the ubiquinol-cytochrome c reductase complex (complex III or cytochrome b-c1 complex) that is part of the mitochondrial respiratory chain. The b-c1 complex mediates electron transfer from ubiquinol to cytochrome c. Contributes to the generation of a proton gradient across the mitochondrial membrane that is then used for ATP synthesis. This chain is Cytochrome b (MT-CYB), found in Antaresia maculosa (Eastern small blotched python).